The primary structure comprises 314 residues: Formate-nitrite transporter (314 aa).

Residues 1-47 are Cytoplasmic-facing; sequence MSKGKSKYVIDPISVKTACTSEESYIRCVEYGKGKAHYPNLSLLAKA. A helical membrane pass occupies residues 48-68; it reads ILAGVFVGVCAHASGIAGGHF. The Extracellular segment spans residues 69–78; sequence YYHKLREYVG. The chain crosses the membrane as a helical span at residues 79-99; it reads ISMSAFVYGFTFPIAFLCIIA. Residues 100–128 are Cytoplasmic-facing; the sequence is TGSDLFTGNTLAVTTALLQRKVSLLQYLR. Residues 129-149 form a helical membrane-spanning segment; sequence VMSISLFGNYLGAVSFAFFVS. Topologically, residues 150–185 are extracellular; that stretch reads HLSGAYEKHTDVTKNHIFQFLNDIAEKKISHTFIQC. Residues 186 to 206 traverse the membrane as a helical segment; the sequence is ICLAIGCNIFVCLAVYFVLTI. Topologically, residues 207–211 are cytoplasmic; sequence KDGSG. The chain crosses the membrane as a helical span at residues 212–232; sequence MVFSVFFAVYAFAIAGYEHII. Over 233-257 the chain is Extracellular; it reads ANMYTLNLALMVEAKVTWSKVYFHN. A helical transmembrane segment spans residues 258–278; sequence LLPTLIGNYIAGALVLACPLF. The Cytoplasmic segment spans residues 279-314; sequence YIYRNSYRDYERTRGDGSNCGLRSLSIEMQNGSNGN.

It belongs to the FNT transporter (TC 1.A.16) family. As to quaternary structure, homopentamer.

It is found in the cell membrane. It localises to the vacuole membrane. The catalysed reaction is (S)-lactate(in) + H(+)(in) = (S)-lactate(out) + H(+)(out). It carries out the reaction formate(in) + H(+)(in) = formate(out) + H(+)(out). The enzyme catalyses pyruvate(out) + H(+)(out) = pyruvate(in) + H(+)(in). It catalyses the reaction acetate(out) + H(+)(out) = acetate(in) + H(+)(in). Its activity is regulated as follows. Inhibited by the Malaria Box compound MMV007839 and its derivatives BH296 and BH267.meta. Monocarboxylate-proton symporter that mediates the efflux of the waste product lactate in the intraerythrocytic parasites; active in acidic-to-neutral pH range. Transports L-lactate. The chain is Formate-nitrite transporter from Plasmodium knowlesi (strain H).